A 345-amino-acid polypeptide reads, in one-letter code: Anthranilate phosphoribosyltransferase (345 aa).

5-phospho-alpha-D-ribose 1-diphosphate is bound by residues Gly-86, 89-90 (GD), Thr-94, 96-99 (NIST), 114-122 (KHGNRNLSS), and Ala-126. Residue Gly-86 participates in anthranilate binding. Ser-98 lines the Mg(2+) pocket. Asn-117 is an anthranilate binding site. Position 172 (Arg-172) interacts with anthranilate. 2 residues coordinate Mg(2+): Asp-231 and Glu-232.

It belongs to the anthranilate phosphoribosyltransferase family. As to quaternary structure, homodimer. The cofactor is Mg(2+).

It carries out the reaction N-(5-phospho-beta-D-ribosyl)anthranilate + diphosphate = 5-phospho-alpha-D-ribose 1-diphosphate + anthranilate. It participates in amino-acid biosynthesis; L-tryptophan biosynthesis; L-tryptophan from chorismate: step 2/5. In terms of biological role, catalyzes the transfer of the phosphoribosyl group of 5-phosphorylribose-1-pyrophosphate (PRPP) to anthranilate to yield N-(5'-phosphoribosyl)-anthranilate (PRA). The protein is Anthranilate phosphoribosyltransferase of Jannaschia sp. (strain CCS1).